Here is a 284-residue protein sequence, read N- to C-terminus: 4-hydroxybenzoate octaprenyltransferase (284 aa).

The next 7 membrane-spanning stretches (helical) occupy residues 33–53 (VIAA…LGVF), 93–113 (IGLF…MNPL), 136–156 (YLPQ…AWAA), 159–179 (GELP…TIAY), 209–229 (LVIG…GQHY), 231–248 (LGQS…LFVY), and 264–284 (AFLN…IAFW).

Belongs to the UbiA prenyltransferase family. The cofactor is Mg(2+).

The protein resides in the cell inner membrane. It carries out the reaction all-trans-octaprenyl diphosphate + 4-hydroxybenzoate = 4-hydroxy-3-(all-trans-octaprenyl)benzoate + diphosphate. It functions in the pathway cofactor biosynthesis; ubiquinone biosynthesis. Functionally, catalyzes the prenylation of para-hydroxybenzoate (PHB) with an all-trans polyprenyl group. Mediates the second step in the final reaction sequence of ubiquinone-8 (UQ-8) biosynthesis, which is the condensation of the polyisoprenoid side chain with PHB, generating the first membrane-bound Q intermediate 3-octaprenyl-4-hydroxybenzoate. The protein is 4-hydroxybenzoate octaprenyltransferase of Vibrio campbellii (strain ATCC BAA-1116).